Consider the following 914-residue polypeptide: Translation initiation factor IF-2 (914 aa).

The segment at 58 to 160 is disordered; that stretch reads KTEKKQTAKK…EAEPKIEVMP (103 aa). Residues 70–91 are compositionally biased toward basic and acidic residues; sequence KKDTVKKDTVKKTAVKKDDSKA. The segment covering 92–103 has biased composition (basic residues); that stretch reads AKKTKPIAKKSA. The span at 104-160 shows a compositional bias: basic and acidic residues; that stretch reads PKTEKKVEKKVESKISKPDNEILEAKPEISKPEIKAEPKKEEIEQKQEAEPKIEVMP. In terms of domain architecture, tr-type G spans 413–582; the sequence is ERVPVITIMG…LLQADLLELK (170 aa). The segment at 422–429 is G1; that stretch reads GHVDHGKT. GTP is bound at residue 422 to 429; it reads GHVDHGKT. Residues 447–451 are G2; the sequence is GITQH. The segment at 468 to 471 is G3; sequence DTPG. Residues 468–472 and 522–525 each bind GTP; these read DTPGH and NKMD. The G4 stretch occupies residues 522-525; it reads NKMD. Residues 558–560 are G5; the sequence is SAK.

The protein belongs to the TRAFAC class translation factor GTPase superfamily. Classic translation factor GTPase family. IF-2 subfamily.

The protein localises to the cytoplasm. In terms of biological role, one of the essential components for the initiation of protein synthesis. Protects formylmethionyl-tRNA from spontaneous hydrolysis and promotes its binding to the 30S ribosomal subunits. Also involved in the hydrolysis of GTP during the formation of the 70S ribosomal complex. The sequence is that of Translation initiation factor IF-2 from Campylobacter hominis (strain ATCC BAA-381 / DSM 21671 / CCUG 45161 / LMG 19568 / NCTC 13146 / CH001A).